The chain runs to 319 residues: Beta-ketoacyl-[acyl-carrier-protein] synthase III (319 aa).

Active-site residues include cysteine 110 and histidine 246. The ACP-binding stretch occupies residues 247–251; it reads QANYR. The active site involves asparagine 276.

This sequence belongs to the thiolase-like superfamily. FabH family. In terms of assembly, homodimer.

It localises to the cytoplasm. It catalyses the reaction malonyl-[ACP] + acetyl-CoA + H(+) = 3-oxobutanoyl-[ACP] + CO2 + CoA. The protein operates within lipid metabolism; fatty acid biosynthesis. Its function is as follows. Catalyzes the condensation reaction of fatty acid synthesis by the addition to an acyl acceptor of two carbons from malonyl-ACP. Catalyzes the first condensation reaction which initiates fatty acid synthesis and may therefore play a role in governing the total rate of fatty acid production. Possesses both acetoacetyl-ACP synthase and acetyl transacylase activities. Its substrate specificity determines the biosynthesis of branched-chain and/or straight-chain of fatty acids. In Lactobacillus delbrueckii subsp. bulgaricus (strain ATCC BAA-365 / Lb-18), this protein is Beta-ketoacyl-[acyl-carrier-protein] synthase III.